Here is a 219-residue protein sequence, read N- to C-terminus: Cytidylate kinase (219 aa).

10–18 (GPAAAGKST) lines the ATP pocket.

This sequence belongs to the cytidylate kinase family. Type 1 subfamily.

The protein resides in the cytoplasm. It carries out the reaction CMP + ATP = CDP + ADP. The catalysed reaction is dCMP + ATP = dCDP + ADP. The sequence is that of Cytidylate kinase from Staphylococcus aureus (strain bovine RF122 / ET3-1).